Here is a 499-residue protein sequence, read N- to C-terminus: Glutamyl-tRNA(Gln) amidotransferase subunit B, chloroplastic/mitochondrial (499 aa).

Belongs to the GatB/GatE family. GatB subfamily. In terms of assembly, subunit of the heterotrimeric GatCAB amidotransferase (AdT) complex, composed of A, B and C subunits.

The protein resides in the mitochondrion. It is found in the plastid. Its subcellular location is the chloroplast. It catalyses the reaction L-glutamyl-tRNA(Gln) + L-glutamine + ATP + H2O = L-glutaminyl-tRNA(Gln) + L-glutamate + ADP + phosphate + H(+). Functionally, allows the formation of correctly charged Gln-tRNA(Gln) through the transamidation of misacylated Glu-tRNA(Gln) in chloroplasts and mitochondria. The reaction takes place in the presence of glutamine and ATP through an activated gamma-phospho-Glu-tRNA(Gln). The sequence is that of Glutamyl-tRNA(Gln) amidotransferase subunit B, chloroplastic/mitochondrial from Ostreococcus lucimarinus (strain CCE9901).